The sequence spans 1352 residues: Astrotactin-2 (1352 aa).

The tract at residues 1-31 (MAAAGARRSPGRGLGLRGRPRLGFHPGPPPP) is disordered. Positions 1–51 (MAAAGARRSPGRGLGLRGRPRLGFHPGPPPPPPPPLLLLFLLLLPPPPLLA) are cleaved as a signal peptide. The Lumenal portion of the chain corresponds to 52 to 218 (GATAAAASRE…IVEEQMHILH (167 aa)). Asn-180 carries N-linked (GlcNAc...) asparagine glycosylation. The chain crosses the membrane as a helical span at residues 219–239 (ISVMGGLIALLLLLLVFTVAL). At 240–447 (YAQRRWQKRR…KGLLKSPVNK (208 aa)) the chain is on the cytoplasmic side. Disordered stretches follow at residues 308–327 (EEEE…DEFG) and 375–421 (TPVE…ADDE). Residues 383–392 (QPASRSSTSA) are compositionally biased toward polar residues. The chain crosses the membrane as a helical span at residues 448 to 468 (TALTLIAVSSCILAMVCGNQM). The Lumenal portion of the chain corresponds to 469–1352 (SCPLTVKVTL…RNTYGETKGR (884 aa)). 3 consecutive EGF-like domains span residues 523–563 (VRDL…HLCV), 664–708 (PVRD…SGCY), and 712–764 (KGID…KSCL). Intrachain disulfides connect Cys-527–Cys-539, Cys-535–Cys-546, Cys-548–Cys-562, Cys-668–Cys-681, Cys-675–Cys-692, Cys-694–Cys-707, Cys-716–Cys-728, Cys-724–Cys-748, and Cys-750–Cys-763. A glycan (N-linked (GlcNAc...) asparagine) is linked at Asn-796. 3 cysteine pairs are disulfide-bonded: Cys-838/Cys-1000, Cys-929/Cys-990, and Cys-996/Cys-1003. N-linked (GlcNAc...) asparagine glycosylation is present at Asn-1033. 5 disulfide bridges follow: Cys-1049–Cys-1060, Cys-1062–Cys-1075, Cys-1149–Cys-1171, Cys-1203–Cys-1290, and Cys-1311–Cys-1334. Positions 1079–1201 (PQPVLRLSPT…SELSTVTLRT (123 aa)) constitute a Fibronectin type-III domain.

Belongs to the astrotactin family. As to quaternary structure, interacts with ASTN1; the interaction is not calcium-dependent. Detected in cerebellum granule neurons; not detected in astroglia (at protein level). Detected primarily in cerebellum, and at lower levels in brain cortex, olfactory bulb, hindbrain and hippocampus dentate gyrus. Between 6 and 10 days after birth, when granule cell migration occurs in the cerebellum, detected in granule cell precursors in the external germinal layer, the molecular layer, the internal granule layer and in Purkinje neurons. Detected in postmitotic neurons in adult cerebellum.

Its subcellular location is the membrane. The protein localises to the perikaryon. It localises to the cytoplasm. The protein resides in the cell cortex. It is found in the early endosome. Its subcellular location is the late endosome. The protein localises to the cytoplasmic vesicle. It localises to the clathrin-coated vesicle. Its function is as follows. Mediates recycling of the neuronal cell adhesion molecule ASTN1 to the anterior pole of the cell membrane in migrating neurons. Promotes ASTN1 internalization and intracellular transport of endocytosed ASTN1. Selectively binds inositol-4,5-bisphosphate, inositol-3,4,5-trisphosphate and inositol-1,3,4,5-tetrakisphosphate, suggesting it is recruited to membranes that contain lipids with a phosphoinositide headgroup. This Mus musculus (Mouse) protein is Astrotactin-2 (Astn2).